The sequence spans 222 residues: Small ribosomal subunit protein eS1 (222 aa).

It belongs to the eukaryotic ribosomal protein eS1 family.

The sequence is that of Small ribosomal subunit protein eS1 from Methanocaldococcus jannaschii (strain ATCC 43067 / DSM 2661 / JAL-1 / JCM 10045 / NBRC 100440) (Methanococcus jannaschii).